Here is a 536-residue protein sequence, read N- to C-terminus: CRISPR-associated DNA-binding protein Cas12m (536 aa).

The segment at 1-59 (MPFGKKARHVKAYQFGADAPQEGMEAVLEQHRLRTDYYNALVEMELRQREERTALLANL) is recognition domain (REC1-N). The interval 60–105 (AAESGLESPNQVYERLKAAGEKGIRKHPEYVAARERQKALYGHPRL) is recognition domain (REC2). Residues 106–159 (LELQSRQREERNALRRSFGAKGLYSSNYLDVERAFDKARQSPELRFRRYSPHEG) form a recognition domain (REC1-C) region. Residues 160–257 (RLAVLYTEGL…RWTVSVVVEV (98 aa)) are wedge domain (WED). Residues 258 to 270 (EGPPVASPTGRGA) form a linker region. The tract at residues 271–481 (VAVDLGWRRV…QRGKPVRKLN (211 aa)) is ruvC-I. The tract at residues 482 to 516 (PAHTTTDCHACGGALVGDPAKELRLYCPTCERFYD) is target nucleic-acid binding (TNB). Zn(2+)-binding residues include cysteine 489, cysteine 492, cysteine 508, and cysteine 511. The interval 517–536 (QDENAARNLLRRAQEVQAQV) is ruvC-II. Aspartate 518 is a binding site for Mg(2+).

The protein belongs to the CRISPR-associated DNA-binding protein Cas12m family. The cofactor is Mg(2+). Zn(2+) serves as cofactor.

With respect to regulation, pre-crRNA processing is inhibited by EDTA. CRISPR (clustered regularly interspaced short palindromic repeat), is an adaptive immune system that provides protection against mobile genetic elements (viruses, transposable elements and conjugative plasmids). CRISPR clusters contain sequences complementary to antecedent mobile elements and target invading nucleic acids. CRISPR clusters are transcribed and processed into CRISPR RNA (crRNA). Recognizes a short motif in the CRISPR repeat sequences (the 5' PAM or protospacer adjacent motif, 5'-TT/CN-3' in this organism) to help distinguish self versus nonself, as targets within the bacterial CRISPR locus do not have PAMs. Cas12m-crRNA binds DNA in a PAM-dependent, crRNA-guided fashion. DNA-binding probably inhibits transcription, leading to gene silencing. No dsDNA, ssDNA or RNA nuclease activity is seen for the crRNA-Cas12m complex. Upon expression in E.coli as a CRISPR region preferentially binds to its associated crRNA. Is required to process pre-crRNA to mature crRNA without a tracrRNA; processing is Mg(2+)-dependent and does not require the predicted RuvC domain catalytic site. The protein is CRISPR-associated DNA-binding protein Cas12m of Allomeiothermus silvanus (strain ATCC 700542 / DSM 9946 / NBRC 106475 / NCIMB 13440 / VI-R2) (Thermus silvanus).